The chain runs to 153 residues: Putative nuclear shuttle protein (153 aa).

The protein belongs to the nanoviridae nuclear shuttle protein family.

The protein localises to the host nucleus. The protein resides in the host cytoplasm. Functionally, putative nuclear shuttle protein. This chain is Putative nuclear shuttle protein (DNA-N), found in Trifolium subterraneum (Subterranean clover).